Reading from the N-terminus, the 157-residue chain is Large ribosomal subunit protein eL24 (157 aa).

The tract at residues 94-157 (RNQKPEVRKA…ISAPRVGGKR (64 aa)) is disordered. Positions 96–117 (QKPEVRKAQREQAIRAAKEAKK) are enriched in basic and acidic residues. Residues 123-140 (KKPAAPSAKASTKTAQKP) are compositionally biased toward low complexity.

Belongs to the eukaryotic ribosomal protein eL24 family. In terms of assembly, component of the large ribosomal subunit.

The protein localises to the cytoplasm. Functionally, component of the large ribosomal subunit. The ribosome is a large ribonucleoprotein complex responsible for the synthesis of proteins in the cell. The chain is Large ribosomal subunit protein eL24 (rpl24) from Pagrus major (Red sea bream).